The sequence spans 706 residues: Translation factor GUF1 homolog, mitochondrial (706 aa).

The tr-type G domain occupies 89 to 272; sequence SRIRNFSIIA…SIVKNVPPPQ (184 aa). Residues 98–105, 165–169, and 219–222 each bind GTP; these read AHIDHGKS, DTPGH, and NKID.

The protein belongs to the TRAFAC class translation factor GTPase superfamily. Classic translation factor GTPase family. LepA subfamily.

The protein resides in the mitochondrion inner membrane. The catalysed reaction is GTP + H2O = GDP + phosphate + H(+). Promotes mitochondrial protein synthesis. May act as a fidelity factor of the translation reaction, by catalyzing a one-codon backward translocation of tRNAs on improperly translocated ribosomes. Binds to mitochondrial ribosomes in a GTP-dependent manner. The polypeptide is Translation factor GUF1 homolog, mitochondrial (Thalassiosira pseudonana (Marine diatom)).